Reading from the N-terminus, the 478-residue chain is Geranial dehydrogenase (478 aa).

NAD(+) is bound at residue 230-235 (GSTSAG). The Proton acceptor role is filled by E252. C286 functions as the Nucleophile in the catalytic mechanism.

It belongs to the aldehyde dehydrogenase family.

The enzyme catalyses (2E)-geranial + NAD(+) + H2O = geranate + NADH + 2 H(+). The catalysed reaction is perillyl aldehyde + NAD(+) + H2O = perillate + NADH + 2 H(+). It functions in the pathway terpene metabolism; monoterpene degradation. Its function is as follows. Involved in the degradation of the monoterpenes beta-myrcene and limonene. During anaerobic degradation of beta-myrcene, catalyzes the NAD(+)-dependent oxidation of geranial to geranic acid. Seems to be specific for the trans-isomer geranial, since it does not act on the cis-isomer neral. During degradation of limonene, catalyzes the NAD(+)-dependent conversion of perillyl aldehyde to perrilic acid. This chain is Geranial dehydrogenase, found in Castellaniella defragrans (strain DSM 12143 / CCUG 39792 / 65Phen) (Alcaligenes defragrans).